A 380-amino-acid chain; its full sequence is L-lactate dehydrogenase (380 aa).

Positions 1–380 constitute an FMN hydroxy acid dehydrogenase domain; that stretch reads MIISSPNDYR…TRDSLVGLPR (380 aa). Tyr-24 is a substrate binding site. Residues Ser-106 and Gln-127 each coordinate FMN. Tyr-129 is a substrate binding site. Thr-155 is an FMN binding site. Arg-164 provides a ligand contact to substrate. An FMN-binding site is contributed by Lys-251. His-275 functions as the Proton acceptor in the catalytic mechanism. A substrate-binding site is contributed by Arg-278. Residue 306-330 coordinates FMN; that stretch reads DSGIRTGLDVVRMLALGAKGVLLGR.

Belongs to the FMN-dependent alpha-hydroxy acid dehydrogenase family. Requires FMN as cofactor.

The protein localises to the cell inner membrane. The enzyme catalyses (S)-lactate + A = pyruvate + AH2. Catalyzes the conversion of L-lactate to pyruvate. Is coupled to the respiratory chain. The protein is L-lactate dehydrogenase of Azorhizobium caulinodans (strain ATCC 43989 / DSM 5975 / JCM 20966 / LMG 6465 / NBRC 14845 / NCIMB 13405 / ORS 571).